A 150-amino-acid chain; its full sequence is DNA-directed RNA polymerases I, II, and III subunit RPABC3 (150 aa).

A2 bears the N-acetylalanine mark.

The protein belongs to the eukaryotic RPB8 RNA polymerase subunit family. In terms of assembly, component of the RNA polymerase I (Pol I), RNA polymerase II (Pol II) and RNA polymerase III (Pol III) complexes consisting of at least 13, 12 and 17 subunits, respectively. Pol I complex consists of a ten-subunit catalytic core composed of POLR1A/RPA1, POLR1B/RPA2, POLR1C/RPAC1, POLR1D/RPAC2, POLR1H/RPA12, POLR2E/RPABC1, POLR2F/RPABC2, POLR2H/RPABC3, POLR2K/RPABC4 and POLR2L/RPABC5; a mobile stalk subunit POLR1F/RPA43 protruding from the core and additional subunits homologous to general transcription factors POLR1E/RPA49 and POLR1G/RPA34. Part of Pol I pre-initiation complex (PIC), in which Pol I core assembles with RRN3 and promoter-bound UTBF and SL1/TIF-IB complex. Pol II complex contains a ten-subunit catalytic core composed of POLR2A/RPB1, POLR2B/RPB2, POLR2C/RPB3, POLR2I/RPB9, POLR2J/RPB11, POLR2E/RPABC1, POLR2F/RPABC2, POLR2H/RPABC3, POLR2K/RPABC4 and POLR2L/RPABC5 and a mobile stalk composed of two subunits POLR2D/RPB4 and POLR2G/RPB7. Part of Pol II(G) complex, in which Pol II core associates with an additional subunit POLR2M; unlike conventional Pol II, Pol II(G) functions as a transcriptional repressor. Part of Pol II pre-initiation complex (PIC), in which Pol II core assembles with Mediator, general transcription factors and other specific initiation factors including GTF2E1, GTF2E2, GTF2F1, GTF2F2, TCEA1, ERCC2, ERCC3, GTF2H2, GTF2H3, GTF2H4, GTF2H5, GTF2A1, GTF2A2, GTF2B and TBP; this large multi-subunit PIC complex mediates DNA unwinding and targets Pol II core to the transcription start site where the first phosphodiester bond forms. Directly interacts with POLR2A. Pol III complex consists of a ten-subunit catalytic core composed of POLR3A/RPC1, POLR3B/RPC2, POLR1C/RPAC1, POLR1D/RPAC2, POLR3K/RPC10, POLR2E/RPABC1, POLR2F/RPABC2, POLR2H/RPABC3, POLR2K/RPABC4 and POLR2L/RPABC5; a mobile stalk composed of two subunits POLR3H/RPC8 and CRCP/RPC9, protruding from the core and functioning primarily in transcription initiation; and additional subunits homologous to general transcription factors of the RNA polymerase II machinery, POLR3C/RPC3-POLR3F/RPC6-POLR3G/RPC7 heterotrimer required for transcription initiation and POLR3D/RPC4-POLR3E/RPC5 heterodimer involved in both transcription initiation and termination.

The protein localises to the nucleus. It localises to the nucleolus. In terms of biological role, DNA-dependent RNA polymerase catalyzes the transcription of DNA into RNA using the four ribonucleoside triphosphates as substrates. Common component of RNA polymerases I, II and III which synthesize ribosomal RNA precursors, mRNA precursors and many functional non-coding RNAs, and small RNAs, such as 5S rRNA and tRNAs, respectively. The chain is DNA-directed RNA polymerases I, II, and III subunit RPABC3 (POLR2H) from Bos taurus (Bovine).